The sequence spans 802 residues: Leucine--tRNA ligase (802 aa).

Residues 40 to 51 carry the 'HIGH' region motif; that stretch reads PYPSGAGLHVGH. The 'KMSKS' region signature appears at 576-580; sequence KMSKS. Lys579 is a binding site for ATP.

The protein belongs to the class-I aminoacyl-tRNA synthetase family.

It is found in the cytoplasm. The enzyme catalyses tRNA(Leu) + L-leucine + ATP = L-leucyl-tRNA(Leu) + AMP + diphosphate. The chain is Leucine--tRNA ligase from Bacillus anthracis (strain A0248).